Here is a 91-residue protein sequence, read N- to C-terminus: Probable Fe(2+)-trafficking protein (91 aa).

It belongs to the Fe(2+)-trafficking protein family.

In terms of biological role, could be a mediator in iron transactions between iron acquisition and iron-requiring processes, such as synthesis and/or repair of Fe-S clusters in biosynthetic enzymes. In Thiobacillus denitrificans (strain ATCC 25259 / T1), this protein is Probable Fe(2+)-trafficking protein.